Reading from the N-terminus, the 62-residue chain is Large ribosomal subunit protein bL28 (62 aa).

Belongs to the bacterial ribosomal protein bL28 family.

In Acholeplasma laidlawii (strain PG-8A), this protein is Large ribosomal subunit protein bL28.